Reading from the N-terminus, the 134-residue chain is Small ribosomal subunit protein uS8c (134 aa).

It belongs to the universal ribosomal protein uS8 family. As to quaternary structure, part of the 30S ribosomal subunit.

The protein resides in the plastid. The protein localises to the chloroplast. Its function is as follows. One of the primary rRNA binding proteins, it binds directly to 16S rRNA central domain where it helps coordinate assembly of the platform of the 30S subunit. This chain is Small ribosomal subunit protein uS8c (rps8), found in Gossypium hirsutum (Upland cotton).